Reading from the N-terminus, the 171-residue chain is Co-chaperone protein HscB (171 aa).

The J domain maps to 2–74 (DYFTLFGLPA…LTRAEYLLSL (73 aa)).

The protein belongs to the HscB family. In terms of assembly, interacts with HscA and stimulates its ATPase activity. Interacts with IscU.

In terms of biological role, co-chaperone involved in the maturation of iron-sulfur cluster-containing proteins. Seems to help targeting proteins to be folded toward HscA. This is Co-chaperone protein HscB from Salmonella heidelberg (strain SL476).